The following is a 385-amino-acid chain: Acetate kinase (385 aa).

N9 is a binding site for Mg(2+). K16 contacts ATP. A substrate-binding site is contributed by R75. The active-site Proton donor/acceptor is D132. ATP-binding positions include 192-196 (HLGNG), 266-268 (DFR), and 314-318 (GIGEN). E368 contributes to the Mg(2+) binding site.

The protein belongs to the acetokinase family. Homodimer. Mg(2+) serves as cofactor. Requires Mn(2+) as cofactor.

The protein resides in the cytoplasm. It catalyses the reaction acetate + ATP = acetyl phosphate + ADP. It participates in metabolic intermediate biosynthesis; acetyl-CoA biosynthesis; acetyl-CoA from acetate: step 1/2. Catalyzes the formation of acetyl phosphate from acetate and ATP. Can also catalyze the reverse reaction. The protein is Acetate kinase of Mycobacterium bovis (strain ATCC BAA-935 / AF2122/97).